The following is a 353-amino-acid chain: Photosystem II protein D1 (353 aa).

Residue T2 is modified to N-acetylthreonine. The residue at position 2 (T2) is a Phosphothreonine. 3 helical membrane-spanning segments follow: residues 29–46, 118–133, and 142–156; these read YIGW…TATS, HFLL…EWEL, and WIAV…AATA. H118 is a binding site for chlorophyll a. Residue Y126 participates in pheophytin a binding. Residues D170 and E189 each contribute to the [CaMn4O5] cluster site. The helical transmembrane segment at 197 to 218 threads the bilayer; sequence FHMLGVAGVFGGSLFSAMHGSL. Residue H198 participates in chlorophyll a binding. A quinone is bound by residues H215 and 264–265; that span reads SF. H215 serves as a coordination point for Fe cation. Residue H272 coordinates Fe cation. Residues 274-288 traverse the membrane as a helical segment; sequence FLAAWPVVGIWFTAL. 4 residues coordinate [CaMn4O5] cluster: H332, E333, D342, and A344. The propeptide occupies 345–353; sequence AIEAPATNG.

Belongs to the reaction center PufL/M/PsbA/D family. As to quaternary structure, PSII is composed of 1 copy each of membrane proteins PsbA, PsbB, PsbC, PsbD, PsbE, PsbF, PsbH, PsbI, PsbJ, PsbK, PsbL, PsbM, PsbT, PsbX, PsbY, PsbZ, Psb30/Ycf12, at least 3 peripheral proteins of the oxygen-evolving complex and a large number of cofactors. It forms dimeric complexes. It depends on The D1/D2 heterodimer binds P680, chlorophylls that are the primary electron donor of PSII, and subsequent electron acceptors. It shares a non-heme iron and each subunit binds pheophytin, quinone, additional chlorophylls, carotenoids and lipids. D1 provides most of the ligands for the Mn4-Ca-O5 cluster of the oxygen-evolving complex (OEC). There is also a Cl(-1) ion associated with D1 and D2, which is required for oxygen evolution. The PSII complex binds additional chlorophylls, carotenoids and specific lipids. as a cofactor. Tyr-161 forms a radical intermediate that is referred to as redox-active TyrZ, YZ or Y-Z. Post-translationally, C-terminally processed by CTPA; processing is essential to allow assembly of the oxygen-evolving complex and thus photosynthetic growth.

It is found in the plastid membrane. It carries out the reaction 2 a plastoquinone + 4 hnu + 2 H2O = 2 a plastoquinol + O2. Its function is as follows. Photosystem II (PSII) is a light-driven water:plastoquinone oxidoreductase that uses light energy to abstract electrons from H(2)O, generating O(2) and a proton gradient subsequently used for ATP formation. It consists of a core antenna complex that captures photons, and an electron transfer chain that converts photonic excitation into a charge separation. The D1/D2 (PsbA/PsbD) reaction center heterodimer binds P680, the primary electron donor of PSII as well as several subsequent electron acceptors. This chain is Photosystem II protein D1, found in Cuscuta exaltata (Tall dodder).